The primary structure comprises 279 residues: Fatty-acid-binding protein 1 (279 aa).

3 residues coordinate dodecanoate: Arg-103, Tyr-116, and Ser-183.

The protein belongs to the chalcone isomerase family. As to expression, expressed in developing cotyledons, young seedlings, roots, seeds, embryos, macrospores, preanthesis and tapetum. Restricted to developing and reproductive tissues.

It localises to the plastid. The protein resides in the chloroplast stroma. In terms of biological role, fatty-acid-binding protein. Interacts preferentially with saturated fatty acid. May be involved in alpha-linolenic (C18:3) metabolism. In Arabidopsis thaliana (Mouse-ear cress), this protein is Fatty-acid-binding protein 1 (FAP1).